Consider the following 107-residue polypeptide: Thiosulfate sulfurtransferase GlpE (107 aa).

One can recognise a Rhodanese domain in the interval Gln-19–Lys-107. Cys-67 (cysteine persulfide intermediate) is an active-site residue.

Belongs to the GlpE family.

It is found in the cytoplasm. It carries out the reaction thiosulfate + hydrogen cyanide = thiocyanate + sulfite + 2 H(+). It catalyses the reaction thiosulfate + [thioredoxin]-dithiol = [thioredoxin]-disulfide + hydrogen sulfide + sulfite + 2 H(+). Its function is as follows. Transferase that catalyzes the transfer of sulfur from thiosulfate to thiophilic acceptors such as cyanide or dithiols. May function in a CysM-independent thiosulfate assimilation pathway by catalyzing the conversion of thiosulfate to sulfite, which can then be used for L-cysteine biosynthesis. This chain is Thiosulfate sulfurtransferase GlpE, found in Aliivibrio fischeri (strain MJ11) (Vibrio fischeri).